A 162-amino-acid chain; its full sequence is RNA pyrophosphohydrolase (162 aa).

Positions 11–155 constitute a Nudix hydrolase domain; sequence PYRPCVGIVL…KRAVYEEVVA (145 aa). A Nudix box motif is present at residues 45–66; sequence GGIDEGEKPREAALRELWEETG.

Belongs to the Nudix hydrolase family. RppH subfamily. A divalent metal cation is required as a cofactor.

Functionally, accelerates the degradation of transcripts by removing pyrophosphate from the 5'-end of triphosphorylated RNA, leading to a more labile monophosphorylated state that can stimulate subsequent ribonuclease cleavage. This is RNA pyrophosphohydrolase from Cereibacter sphaeroides (strain ATCC 17023 / DSM 158 / JCM 6121 / CCUG 31486 / LMG 2827 / NBRC 12203 / NCIMB 8253 / ATH 2.4.1.) (Rhodobacter sphaeroides).